The following is a 553-amino-acid chain: Arylsulfatase K (553 aa).

The first 16 residues, 1-16 (MLLLLVSVVAALALAA), serve as a signal peptide directing secretion. Residues Asp40 and Cys80 each coordinate Ca(2+). Catalysis depends on Cys80, which acts as the Nucleophile. The residue at position 80 (Cys80) is a 3-oxoalanine (Cys). Asn108 carries an N-linked (GlcNAc...) asparagine glycan. Residue Lys128 participates in substrate binding. Asn191 carries an N-linked (GlcNAc...) asparagine glycan. Position 249 (His249) interacts with substrate. An N-linked (GlcNAc...) asparagine glycan is attached at Asn260. Residues Asp311 and His312 each coordinate Ca(2+). 3 N-linked (GlcNAc...) asparagine glycosylation sites follow: Asn373, Asn411, and Asn496. Positions 530–553 (SPLASSPTQSTSGSQPTLPQSTSG) are disordered. The span at 534 to 553 (SSPTQSTSGSQPTLPQSTSG) shows a compositional bias: low complexity.

The protein belongs to the sulfatase family. The cofactor is Ca(2+). Post-translationally, the conversion to 3-oxoalanine (also known as C-formylglycine, FGly), of a serine or cysteine residue in prokaryotes and of a cysteine residue in eukaryotes, is critical for catalytic activity. The 75-kDa precursor undergoes proteolytic processing to yield a 23 kDa form. In terms of processing, N-glycosylated with both high mannose and complex type sugars.

The protein localises to the secreted. It localises to the lysosome. It catalyses the reaction an aryl sulfate + H2O = a phenol + sulfate + H(+). The catalysed reaction is Hydrolysis of the 2-sulfate groups of the 2-O-sulfo-D-glucuronate residues of chondroitin sulfate, heparin and heparitin sulfate.. Its function is as follows. Catalyzes the hydrolysis of pseudosubstrates such as p-nitrocatechol sulfate and p-nitrophenyl sulfate. Catalyzes the hydrolysis of the 2-sulfate groups of the 2-O-sulfo-D-glucuronate residues of chondroitin sulfate, heparin and heparitin sulfate. Acts selectively on 2-sulfoglucuronate and lacks activity against 2-sulfoiduronate. The sequence is that of Arylsulfatase K (Arsk) from Mus musculus (Mouse).